The following is a 694-amino-acid chain: MFKPLLSAELFFNWTAKDFKDKTSFLKQACRVLQDKNCIKEEQIALTALKEREAQITTGIMSKLALPHMQSATVLKPFVAVFKVNNVDWQSLDNQPVKLIFLIGVPKDQGNLHLEFISQFSKLMLQDEFANKVPNIRSFNGLINLIDSFQQTAVASQPVVNEAAAQTEEPKDTNTQYDFVAVTACPTGIAHTFMAKEALEKFARDHNLKVKVETQGTDGIQNQLTESDLNNTKGIILACDRLIDLTRFYGHANVVEVSTTKAIKTPQTVYDQVVKKEGKLLGNKSSDSASQTELKETTEQLSFKDFHKRIYRAILSGVSYMLPFVVFGGILIAIAFLIDINNAGNAGKQFGSKDPIANWFKTLGGLSFGLIVPILSAYIAFALVGRQGLLPGFIVGLISAGKFLLNIDIVTGKIDWATESKVSSGFFGAIFGGLLAAVLIIVQQRYIYRKLPQALQGIKNILFIPLLGTLVTAALFWVINIPLIYLNYGLSKFLQIMDKPYLAPLLGLVIGLMMCFDLGGPVNKAAYVFGVVSLESQNSGTVAMASAILSGMVPPLGIAIAATIRKQCFDKEELPAAYACYVMGLSFISEGAIPFVAKRPKIMLAANLIGGAVCGVLTGAFALTIRAPHGGVFVFALLKTNLEGIAGNTLQIGAGVGLALLALIVSSFISAGIIIGHNLLVVRKKTKQLVNTNA.

In terms of domain architecture, PTS EIIA type-2 spans 4–149; it reads PLLSAELFFN…NGLINLIDSF (146 aa). Residue histidine 68 is the Tele-phosphohistidine intermediate; for EIIA activity of the active site. Residue histidine 68 is modified to Phosphohistidine; by HPr. One can recognise a PTS EIIB type-2 domain in the interval 179 to 275; it reads FVAVTACPTG…PQTVYDQVVK (97 aa). Residue cysteine 185 is the Phosphocysteine intermediate; for EIIB activity of the active site. At cysteine 185 the chain carries Phosphocysteine; by EIIA. Residues 310–687 form the PTS EIIC type-2 domain; it reads IYRAILSGVS…NLLVVRKKTK (378 aa). 10 helical membrane passes run 318 to 338, 364 to 384, 390 to 410, 422 to 442, 461 to 481, 502 to 522, 542 to 562, 576 to 596, 602 to 622, and 655 to 675; these read VSYM…AFLI, GGLS…FALV, LPGF…IDIV, VSSG…LIIV, ILFI…VINI, LAPL…GGPV, VAMA…AIAA, AAYA…IPFV, IMLA…GAFA, and GVGL…GIII.

It localises to the cell membrane. The enzyme catalyses D-fructose(out) + N(pros)-phospho-L-histidyl-[protein] = D-fructose 1-phosphate(in) + L-histidyl-[protein]. The phosphoenolpyruvate-dependent sugar phosphotransferase system (sugar PTS), a major carbohydrate active transport system, catalyzes the phosphorylation of incoming sugar substrates concomitantly with their translocation across the cell membrane. This system is involved in fructose transport. The chain is PTS system fructose-specific EIIABC component from Mycoplasma pneumoniae (strain ATCC 29342 / M129 / Subtype 1) (Mycoplasmoides pneumoniae).